Reading from the N-terminus, the 2090-residue chain is Nuclear pore complex protein Nup205 (2090 aa).

This sequence belongs to the NUP186/NUP192/NUP205 family. As to quaternary structure, part of the nuclear pore complex (NPC).

It is found in the nucleus. It localises to the nuclear pore complex. Plays a role in the nuclear pore complex (NPC) assembly and maintenance, but with limited role in NPC permeability. Required for specific nuclear import pathways such as Mad import. The sequence is that of Nuclear pore complex protein Nup205 from Drosophila melanogaster (Fruit fly).